A 466-amino-acid chain; its full sequence is Sushi repeat-containing protein SRPX2 (466 aa).

The signal sequence occupies residues 1-24; the sequence is MKTGSLTQRGALLLLLLLAPAVTP. 3 Sushi domains span residues 70–120, 121–179, and 263–322; these read ATCY…YCRQ, MRCH…VCVD, and RRCP…VCTP. Intrachain disulfides connect C72-C106, C92-C118, C123-C164, and C150-C177. The 85-residue stretch at 178–262 folds into the HYR domain; the sequence is VDIDPPKIRC…SCKFIVKVQV (85 aa). Cystine bridges form between C265/C307 and C293/C320.

As to quaternary structure, forms homooligomers. Interacts with PLAUR (via the UPAR/Ly6 domains), ADAMTS4 and CTSB. Interacts with HGF; the interaction increases the mitogenic activity of HGF. Post-translationally, contains chondroitin sulfate chains.

Its subcellular location is the secreted. It localises to the cytoplasm. It is found in the cell surface. The protein localises to the synapse. Acts as a ligand for the urokinase plasminogen activator surface receptor. Plays a role in angiogenesis by inducing endothelial cell migration and the formation of vascular network (cords). Involved in cellular migration and adhesion. Increases the phosphorylation levels of FAK. Interacts with and increases the mitogenic activity of HGF. Promotes synapse formation. The chain is Sushi repeat-containing protein SRPX2 from Rattus norvegicus (Rat).